The sequence spans 441 residues: Histidinol dehydrogenase (441 aa).

NAD(+) contacts are provided by Y136, Q197, and N220. Substrate is bound by residues S243, Q265, and H268. Q265 and H268 together coordinate Zn(2+). Active-site proton acceptor residues include E333 and H334. The substrate site is built by H334, D367, E421, and H426. Zn(2+) is bound at residue D367. H426 provides a ligand contact to Zn(2+).

This sequence belongs to the histidinol dehydrogenase family. Zn(2+) serves as cofactor.

It carries out the reaction L-histidinol + 2 NAD(+) + H2O = L-histidine + 2 NADH + 3 H(+). It functions in the pathway amino-acid biosynthesis; L-histidine biosynthesis; L-histidine from 5-phospho-alpha-D-ribose 1-diphosphate: step 9/9. Functionally, catalyzes the sequential NAD-dependent oxidations of L-histidinol to L-histidinaldehyde and then to L-histidine. This chain is Histidinol dehydrogenase, found in Pseudomonas fluorescens (strain Pf0-1).